A 731-amino-acid chain; its full sequence is 1,4-alpha-glucan branching enzyme GlgB (731 aa).

Aspartate 412 acts as the Nucleophile in catalysis. Glutamate 465 serves as the catalytic Proton donor.

Belongs to the glycosyl hydrolase 13 family. GlgB subfamily. As to quaternary structure, monomer.

The catalysed reaction is Transfers a segment of a (1-&gt;4)-alpha-D-glucan chain to a primary hydroxy group in a similar glucan chain.. Its pathway is glycan biosynthesis; glycogen biosynthesis. Functionally, catalyzes the formation of the alpha-1,6-glucosidic linkages in glycogen by scission of a 1,4-alpha-linked oligosaccharide from growing alpha-1,4-glucan chains and the subsequent attachment of the oligosaccharide to the alpha-1,6 position. The sequence is that of 1,4-alpha-glucan branching enzyme GlgB from Bordetella pertussis (strain Tohama I / ATCC BAA-589 / NCTC 13251).